A 440-amino-acid chain; its full sequence is Gap junction alpha-8 protein (440 aa).

An intramembrane segment occupies 2 to 12; the sequence is GDWSFLGNILE. The Cytoplasmic portion of the chain corresponds to 13-21; the sequence is EVNEHSTVI. The chain crosses the membrane as a helical span at residues 22-42; that stretch reads GRVWLTVLFIFRILILGTAAE. Residues 43–71 lie on the Extracellular side of the membrane; that stretch reads FVWGDEQSDFVCNTQQPGCENVCYDEAFP. Cystine bridges form between Cys54-Cys201, Cys61-Cys195, and Cys65-Cys190. The chain crosses the membrane as a helical span at residues 72–92; sequence ISHIRLWVLQIIFVSTPSLMY. The Cytoplasmic portion of the chain corresponds to 93–161; sequence VGHAVHHVRM…GTLLRTYVCH (69 aa). Residues 111-143 are disordered; it reads AEELCQQSRSNGGERVPIAPDQASIRKSSSSSK. A helical transmembrane segment spans residues 162-182; the sequence is IIFKTLFEVGFIVGHYFLYGF. Residues 183–210 are Extracellular-facing; sequence RILPLYRCSRWPCPNVVDCFVSRPTEKT. A helical membrane pass occupies residues 211–231; the sequence is IFILFMLSVAFVSLFLNIMEM. At 232 to 440 the chain is on the cytoplasmic side; that stretch reads SHLGMKGIRS…SRARSDDLTI (209 aa). The segment at 334-440 is disordered; that stretch reads GAQEVEREEQ…SRARSDDLTI (107 aa). Basic and acidic residues-rich tracts occupy residues 353-364 and 375-399; these read VGEKKQEAEKVA and DGEK…EKVT. A compositionally biased stretch (low complexity) spans 423–432; it reads LSRLSKASSR.

It belongs to the connexin family. Alpha-type (group II) subfamily. As to quaternary structure, a hemichannel or connexon is composed of a hexamer of connexins. A functional gap junction is formed by the apposition of two hemichannels. Forms heteromeric channels with GJA3. Detected in eye lens (at protein level).

The protein resides in the cell membrane. It localises to the cell junction. The protein localises to the gap junction. Structural component of eye lens gap junctions. Gap junctions are dodecameric channels that connect the cytoplasm of adjoining cells. They are formed by the docking of two hexameric hemichannels, one from each cell membrane. Small molecules and ions diffuse from one cell to a neighboring cell via the central pore. This chain is Gap junction alpha-8 protein (Gja8), found in Rattus norvegicus (Rat).